Consider the following 294-residue polypeptide: Phosphatidylglycerol--prolipoprotein diacylglyceryl transferase (294 aa).

7 consecutive transmembrane segments (helical) span residues 21 to 41 (VSLHWYGMMYLIGFVFALWLA), 60 to 80 (LLYVGFVGVFIGGRLGYVLFY), 96 to 116 (WDGGMSFHGGLIGVICAMIWF), 124 to 144 (FFQVADFVAPLIPFGLGLGRI), 199 to 219 (SQLYEMFLEGVVLFIILNIFV), 226 to 246 (GSVSGLFLIGYGAFRIIVEFF), and 259 to 279 (ISMGQILSIPMIILGIIFMVW). A 1,2-diacyl-sn-glycero-3-phospho-(1'-sn-glycerol) is bound at residue R143.

The protein belongs to the Lgt family.

Its subcellular location is the cell inner membrane. It carries out the reaction L-cysteinyl-[prolipoprotein] + a 1,2-diacyl-sn-glycero-3-phospho-(1'-sn-glycerol) = an S-1,2-diacyl-sn-glyceryl-L-cysteinyl-[prolipoprotein] + sn-glycerol 1-phosphate + H(+). The protein operates within protein modification; lipoprotein biosynthesis (diacylglyceryl transfer). Functionally, catalyzes the transfer of the diacylglyceryl group from phosphatidylglycerol to the sulfhydryl group of the N-terminal cysteine of a prolipoprotein, the first step in the formation of mature lipoproteins. The polypeptide is Phosphatidylglycerol--prolipoprotein diacylglyceryl transferase (Proteus mirabilis (strain HI4320)).